The sequence spans 325 residues: Geranylgeranyl transferase type-2 subunit beta (325 aa).

PFTB repeat units follow at residues 9–50, 57–99, 109–150, 157–198, 208–249, and 256–298; these read KEKH…CVLD, KEEV…ATYD, KVRL…SILG, VDPA…AIAN, LEEI…AIIG, and YEKL…SLMG. Geranylgeranyl diphosphate is bound by residues 183–185 and 228–240; these read HAA and RPSK…YSWW. 3 residues coordinate Zn(2+): Asp234, Cys236, and His286.

The protein belongs to the protein prenyltransferase subunit beta family. Heterodimer of an alpha and a beta subunit. It depends on Zn(2+) as a cofactor.

It catalyses the reaction geranylgeranyl diphosphate + L-cysteinyl-[protein] = S-geranylgeranyl-L-cysteinyl-[protein] + diphosphate. Catalyzes the transfer of a geranyl-geranyl moiety from geranyl-geranyl pyrophosphate to proteins having the C-terminal -XCC or -XCXC, where both cysteines may become modified. Acts on YPT1 and SEC4. The sequence is that of Geranylgeranyl transferase type-2 subunit beta (BET2) from Saccharomyces cerevisiae (strain ATCC 204508 / S288c) (Baker's yeast).